A 238-amino-acid polypeptide reads, in one-letter code: Doublecortin domain-containing protein (238 aa).

The interval 82–112 (VFERLNDKQFYTGVQKTKFMELLKNNKNKSS) is partial p25alpha domain. One can recognise a Doublecortin domain in the interval 151 to 232 (KTIFLFNNEK…GDPPAPIRNL (82 aa)).

As to quaternary structure, interacts with alpha-tubulin 1 and beta-tubulin; the interaction stabilizes microtubule assembly.

Its subcellular location is the cytoplasm. It is found in the cytoskeleton. Functionally, involved in the stabilization of microtubules. Probably by controlling microtubules stabilization, plays a role in invasion, microneme secretion and parasite growth in host erythrocytes. This chain is Doublecortin domain-containing protein, found in Plasmodium falciparum (isolate 3D7).